The following is a 49-amino-acid chain: Large ribosomal subunit protein bL33 (49 aa).

It belongs to the bacterial ribosomal protein bL33 family.

In Lacticaseibacillus casei (strain BL23) (Lactobacillus casei), this protein is Large ribosomal subunit protein bL33.